The following is a 356-amino-acid chain: MSTVTITDLARENVRNLTPYQSARRLGGNGDVWLNANEYPTAVEFQLTQQTLNRYPECQPKVVIENYAQYAGVKPEQVLVSRGADEGIELLIRAFCEPGKDAILYCPPTYGMYSVSAETIGVECRTVPTLDNWQLDLQGISDKLDGVKVVYVCSPNNPTGQLINPQDFRTLLELTRGKAIVVADEAYIEFCPQASLAGWLAEYPHLAILRTLSKAFALAGLRCGFTLANEEVINLLMKVIAPYPLSTPVADIAAQALSPQGIVAMRERVAQIIAEREYLIAALQEIPCVEQVFDSETNYILARFKASSAVFKSLWDQGIILRDQNKQPSLSGCLRITVGTREESQRVIDALRAEQV.

K214 is modified (N6-(pyridoxal phosphate)lysine).

This sequence belongs to the class-II pyridoxal-phosphate-dependent aminotransferase family. Histidinol-phosphate aminotransferase subfamily. Homodimer. The cofactor is pyridoxal 5'-phosphate.

It catalyses the reaction L-histidinol phosphate + 2-oxoglutarate = 3-(imidazol-4-yl)-2-oxopropyl phosphate + L-glutamate. Its pathway is amino-acid biosynthesis; L-histidine biosynthesis; L-histidine from 5-phospho-alpha-D-ribose 1-diphosphate: step 7/9. The polypeptide is Histidinol-phosphate aminotransferase (Escherichia coli O127:H6 (strain E2348/69 / EPEC)).